Here is a 1690-residue protein sequence, read N- to C-terminus: DNA-directed RNA polymerase subunit beta' (1690 aa).

Zn(2+)-binding residues include Cys-63, Cys-65, Cys-78, and Cys-81. Asp-753, Asp-755, and Asp-757 together coordinate Mg(2+). Zn(2+) is bound by residues Cys-1107, Cys-1295, Cys-1302, and Cys-1305.

It belongs to the RNA polymerase beta' chain family. In terms of assembly, the RNAP catalytic core consists of 2 alpha, 1 beta, 1 beta' and 1 omega subunit. When a sigma factor is associated with the core the holoenzyme is formed, which can initiate transcription. The cofactor is Mg(2+). Zn(2+) is required as a cofactor.

The enzyme catalyses RNA(n) + a ribonucleoside 5'-triphosphate = RNA(n+1) + diphosphate. In terms of biological role, DNA-dependent RNA polymerase catalyzes the transcription of DNA into RNA using the four ribonucleoside triphosphates as substrates. This chain is DNA-directed RNA polymerase subunit beta', found in Thermotoga maritima (strain ATCC 43589 / DSM 3109 / JCM 10099 / NBRC 100826 / MSB8).